The chain runs to 1409 residues: MAP kinase-activating death domain protein (1409 aa).

Residues 26-230 (RGASQSSPDA…VPVPGKTKVQ (205 aa)) form the uDENN domain. Residues 251–390 (RFTLIDFPLH…DATHLKERLK (140 aa)) enclose the cDENN domain. The dDENN domain occupies 392–496 (AINKMTTMTV…ECCLCPKNET (105 aa)). 4 disordered regions span residues 654-701 (SFDH…MKGL), 761-784 (QHIV…QSKN), 902-1008 (SSSA…KVKT), and 1015-1034 (PQNL…SFLA). Polar residues-rich tracts occupy residues 680 to 691 (SDASDTPTSRGS) and 761 to 772 (QHIVRSKTQPNP). 2 stretches are compositionally biased toward low complexity: residues 773–784 (TSQQTANQQSKN) and 902–913 (SSSAPSTMTTPS). Residues 915 to 925 (HSNDILKESRP) show a composition bias toward basic and acidic residues. Over residues 941-961 (LGQNVTPTSTNNHEIAQSTRS) the composition is skewed to polar residues. Pro residues predominate over residues 963–1003 (ALPPPVPPREAPPIPKRNPPPLGAPPKVPEGARAPPPLPPR). The span at 1020–1031 (PNNQPAQPSSPS) shows a compositional bias: low complexity. In terms of domain architecture, Death spans 1109–1184 (GMDQEPSEMI…GLVCSKEINK (76 aa)).

The protein belongs to the MADD family. In terms of assembly, interacts with cab-1. Expressed in nearly all neurons.

The protein resides in the cell membrane. The protein localises to the cytoplasm. Guanyl-nucleotide exchange factor that regulates small GTPases. Converts GDP-bound inactive form of rab-3 and cab-1 to the GTP-bound active forms. Regulator of presynaptic activity that interacts with rab-3 to regulate synaptic vesicle release. Is also a regulator of the cab-1 synaptic transmission pathway. Probably by converting rab-3 to its GTP-bound active form, plays a role in the recruitment of endophilin unc-57 to synaptic vesicles. Probably by activating rab-3 and thus regulating the trafficking of dense-core vesicles, plays a role in AVG neuron-mediated formation of the right axon tract of the ventral nerve cord. Regulates anterior body muscle contractions (aBOC) and the expulsion steps during the defecation motor program (DMP). Probably by regulating DMP, required for fatty acid uptake by intestinal cells. The polypeptide is MAP kinase-activating death domain protein (aex-3) (Caenorhabditis elegans).